A 423-amino-acid polypeptide reads, in one-letter code: Ornithine cyclodeaminase (423 aa).

The NAD(+) site is built by N241, A242, D320, T352, M353, L354, H355, D373, D396, and V397.

The protein belongs to the AgrE/ArgZ ornithine cyclodeaminase family. It depends on NAD(+) as a cofactor.

It catalyses the reaction L-ornithine = L-proline + NH4(+). Functionally, catalyzes the conversion of ornithine to proline, with the release of ammonia. This Methanocaldococcus jannaschii (strain ATCC 43067 / DSM 2661 / JAL-1 / JCM 10045 / NBRC 100440) (Methanococcus jannaschii) protein is Ornithine cyclodeaminase.